A 277-amino-acid chain; its full sequence is 4-diphosphocytidyl-2-C-methyl-D-erythritol kinase (277 aa).

Residue Lys9 is part of the active site. An ATP-binding site is contributed by 91-101; sequence PMGAGLGGGSS. Asp133 is a catalytic residue.

It belongs to the GHMP kinase family. IspE subfamily.

It catalyses the reaction 4-CDP-2-C-methyl-D-erythritol + ATP = 4-CDP-2-C-methyl-D-erythritol 2-phosphate + ADP + H(+). The protein operates within isoprenoid biosynthesis; isopentenyl diphosphate biosynthesis via DXP pathway; isopentenyl diphosphate from 1-deoxy-D-xylulose 5-phosphate: step 3/6. Its function is as follows. Catalyzes the phosphorylation of the position 2 hydroxy group of 4-diphosphocytidyl-2C-methyl-D-erythritol. This is 4-diphosphocytidyl-2-C-methyl-D-erythritol kinase from Acinetobacter baumannii (strain AB307-0294).